The primary structure comprises 730 residues: Elongation factor 2 (730 aa).

The tr-type G domain maps to 19-260; it reads DRIRNIGIVA…MVVKHLPNPL (242 aa). Residues 28–35, 94–98, and 148–151 contribute to the GTP site; these read AHIDHGKT, DTPGH, and NKVD. At H597 the chain carries Diphthamide.

This sequence belongs to the TRAFAC class translation factor GTPase superfamily. Classic translation factor GTPase family. EF-G/EF-2 subfamily.

It localises to the cytoplasm. Catalyzes the GTP-dependent ribosomal translocation step during translation elongation. During this step, the ribosome changes from the pre-translocational (PRE) to the post-translocational (POST) state as the newly formed A-site-bound peptidyl-tRNA and P-site-bound deacylated tRNA move to the P and E sites, respectively. Catalyzes the coordinated movement of the two tRNA molecules, the mRNA and conformational changes in the ribosome. This is Elongation factor 2 from Methanoculleus marisnigri (strain ATCC 35101 / DSM 1498 / JR1).